The following is a 446-amino-acid chain: tRNA modification GTPase MnmE (446 aa).

Arg24, Glu81, and Lys120 together coordinate (6S)-5-formyl-5,6,7,8-tetrahydrofolate. The TrmE-type G domain occupies 216 to 368 (GLHAVLIGPP…LHIRLRALAL (153 aa)). Asn226 contributes to the K(+) binding site. GTP is bound by residues 226–231 (NAGKSS), 245–251 (TDVAGTT), and 270–273 (DTAG). Ser230 provides a ligand contact to Mg(2+). 3 residues coordinate K(+): Thr245, Val247, and Thr250. Residue Thr251 participates in Mg(2+) binding. Residue Lys446 participates in (6S)-5-formyl-5,6,7,8-tetrahydrofolate binding.

The protein belongs to the TRAFAC class TrmE-Era-EngA-EngB-Septin-like GTPase superfamily. TrmE GTPase family. Homodimer. Heterotetramer of two MnmE and two MnmG subunits. K(+) is required as a cofactor.

It localises to the cytoplasm. Exhibits a very high intrinsic GTPase hydrolysis rate. Involved in the addition of a carboxymethylaminomethyl (cmnm) group at the wobble position (U34) of certain tRNAs, forming tRNA-cmnm(5)s(2)U34. The sequence is that of tRNA modification GTPase MnmE from Xanthomonas euvesicatoria pv. vesicatoria (strain 85-10) (Xanthomonas campestris pv. vesicatoria).